The sequence spans 546 residues: Glutamate--tRNA ligase (546 aa).

The 'HIGH' region signature appears at 41 to 51 (PSPTGFQHIGG). A 'KMSKS' region motif is present at residues 293–297 (KLSKR). An ATP-binding site is contributed by lysine 296.

The protein belongs to the class-I aminoacyl-tRNA synthetase family. Glutamate--tRNA ligase type 1 subfamily. In terms of assembly, monomer.

It localises to the cytoplasm. It carries out the reaction tRNA(Glu) + L-glutamate + ATP = L-glutamyl-tRNA(Glu) + AMP + diphosphate. Catalyzes the attachment of glutamate to tRNA(Glu) in a two-step reaction: glutamate is first activated by ATP to form Glu-AMP and then transferred to the acceptor end of tRNA(Glu). The chain is Glutamate--tRNA ligase from Clostridium perfringens (strain 13 / Type A).